The chain runs to 175 residues: uncharacterized protein (175 aa).

This is an uncharacterized protein from Acanthamoeba polyphaga mimivirus (APMV).